The primary structure comprises 339 residues: 2-keto-3-deoxygluconate permease (339 aa).

The next 10 membrane-spanning stretches (helical) occupy residues 10 to 30, 42 to 62, 77 to 97, 100 to 120, 141 to 161, 163 to 183, 199 to 219, 224 to 244, 254 to 274, and 289 to 309; these read IPGG…TFAP, GLIS…GASI, LVVT…RILP, GVEV…AMDM, AFVL…LGTA, IASF…VGFA, VQTL…LSVI, LLGV…LIVA, TAGI…VLIA, and TLVA…TAMW. The segment at 315-339 is disordered; it reads GGDGTVPKEDAVEEKAEQQRRRIIK. Residues 320 to 339 are compositionally biased toward basic and acidic residues; that stretch reads VPKEDAVEEKAEQQRRRIIK.

Belongs to the KdgT transporter family.

It is found in the cell inner membrane. It catalyses the reaction 2-dehydro-3-deoxy-D-gluconate(in) + H(+)(in) = 2-dehydro-3-deoxy-D-gluconate(out) + H(+)(out). Its activity is regulated as follows. Uptake is inhibited by the protonophore uncouplers carbonyl cyanide m-chlorophenylhydrazone (CCCP) and 2,4-dinitrophenol, and by NaN(3). Functionally, catalyzes the proton-dependent uptake of 2-keto-3-deoxygluconate (KDG) into the cell. Can also mediate the uptake of glucuronate with a low affinity, and may mediate the uptake of 5-keto-4-deoxyuronate (DKI) and 2,5-diketo-3-deoxygluconate (DKII), which are intermediates in pectin degradation. The protein is 2-keto-3-deoxygluconate permease of Dickeya chrysanthemi (Pectobacterium chrysanthemi).